Here is a 913-residue protein sequence, read N- to C-terminus: Probable TonB-dependent receptor HI_1217 (913 aa).

Residues Met1–Ala27 form the signal peptide. The 124-residue stretch at Ser42–Leu165 folds into the TBDR plug domain. The TBDR beta-barrel domain maps to Pro176 to Phe913. A TonB C-terminal box motif is present at residues Leu896–Phe913.

Belongs to the TonB-dependent receptor family.

It localises to the cell outer membrane. Functionally, probable receptor, TonB-dependent. The polypeptide is Probable TonB-dependent receptor HI_1217 (Haemophilus influenzae (strain ATCC 51907 / DSM 11121 / KW20 / Rd)).